Consider the following 237-residue polypeptide: ATP-dependent dethiobiotin synthetase BioD (237 aa).

Position 12-17 (12-17) interacts with ATP; it reads DAGKTL. Threonine 16 contributes to the Mg(2+) binding site. Residue lysine 37 is part of the active site. Serine 41 is a substrate binding site. Residues aspartate 54, 116 to 119, and 213 to 215 contribute to the ATP site; these read EGAG and PRL. Residues aspartate 54 and glutamate 116 each coordinate Mg(2+).

This sequence belongs to the dethiobiotin synthetase family. In terms of assembly, homodimer. Requires Mg(2+) as cofactor.

It localises to the cytoplasm. The enzyme catalyses (7R,8S)-7,8-diammoniononanoate + CO2 + ATP = (4R,5S)-dethiobiotin + ADP + phosphate + 3 H(+). Its pathway is cofactor biosynthesis; biotin biosynthesis; biotin from 7,8-diaminononanoate: step 1/2. Catalyzes a mechanistically unusual reaction, the ATP-dependent insertion of CO2 between the N7 and N8 nitrogen atoms of 7,8-diaminopelargonic acid (DAPA, also called 7,8-diammoniononanoate) to form a ureido ring. This is ATP-dependent dethiobiotin synthetase BioD from Chromohalobacter salexigens (strain ATCC BAA-138 / DSM 3043 / CIP 106854 / NCIMB 13768 / 1H11).